Reading from the N-terminus, the 260-residue chain is Triosephosphate isomerase (260 aa).

11–13 is a binding site for substrate; it reads NWK. His103 (electrophile) is an active-site residue. The active-site Proton acceptor is Glu175. Residues Gly181, Ser220, and 241-242 contribute to the substrate site; that span reads GG.

It belongs to the triosephosphate isomerase family. As to quaternary structure, homodimer.

It is found in the cytoplasm. The catalysed reaction is D-glyceraldehyde 3-phosphate = dihydroxyacetone phosphate. Its pathway is carbohydrate biosynthesis; gluconeogenesis. It functions in the pathway carbohydrate degradation; glycolysis; D-glyceraldehyde 3-phosphate from glycerone phosphate: step 1/1. Involved in the gluconeogenesis. Catalyzes stereospecifically the conversion of dihydroxyacetone phosphate (DHAP) to D-glyceraldehyde-3-phosphate (G3P). The chain is Triosephosphate isomerase from Shewanella sp. (strain W3-18-1).